The following is a 243-amino-acid chain: Transcription factor TFIIS homolog (243 aa).

Positions 77–201 (MRDIIQMMFF…SQQKVAEKTS (125 aa)) constitute a TFIIS central domain. The TFIIS-type zinc finger occupies 202–242 (QLYKCPNCKQRMCTYREVQTRALDEPSTIFCTCKKCGHEFI). Residues C206, C209, C234, and C237 each contribute to the Zn(2+) site.

Belongs to the TFS-II family.

Putative initiation factor. Necessary for efficient transcription elongation past template-encoded arresting sites. This chain is Transcription factor TFIIS homolog, found in Ornithodoros (relapsing fever ticks).